The following is a 416-amino-acid chain: Esterase FrsA (416 aa).

Residues 19 to 39 (ETSTLVRRTRHDQETQGLHST) are disordered.

The protein belongs to the FrsA family.

It carries out the reaction a carboxylic ester + H2O = an alcohol + a carboxylate + H(+). Catalyzes the hydrolysis of esters. The chain is Esterase FrsA from Pectobacterium atrosepticum (strain SCRI 1043 / ATCC BAA-672) (Erwinia carotovora subsp. atroseptica).